Consider the following 136-residue polypeptide: UPF0216 protein PH0358 (136 aa).

The protein belongs to the UPF0216 family.

This is UPF0216 protein PH0358 from Pyrococcus horikoshii (strain ATCC 700860 / DSM 12428 / JCM 9974 / NBRC 100139 / OT-3).